We begin with the raw amino-acid sequence, 306 residues long: Homeobox protein Hox-C13a (306 aa).

Positions 236 to 295 (GRKKRVPYTKIQLKELEKEYAASKFITKDKRRRISATTNLSERQVTIWFQNRRVKEKKFV) form a DNA-binding region, homeobox.

Belongs to the Abd-B homeobox family.

It localises to the nucleus. Functionally, sequence-specific transcription factor which is part of a developmental regulatory system that provides cells with specific positional identities on the anterior-posterior axis. This is Homeobox protein Hox-C13a (hoxc13a) from Danio rerio (Zebrafish).